The sequence spans 417 residues: Multifunctional CCA protein (417 aa).

ATP contacts are provided by G8 and R11. CTP contacts are provided by G8 and R11. Mg(2+) is bound by residues D21 and D23. Positions 91, 137, and 140 each coordinate ATP. 3 residues coordinate CTP: R91, R137, and R140. Positions 225-326 (SGIHTLMTLQ…LNVLKKTDAF (102 aa)) constitute an HD domain.

This sequence belongs to the tRNA nucleotidyltransferase/poly(A) polymerase family. Bacterial CCA-adding enzyme type 1 subfamily. As to quaternary structure, monomer. Can also form homodimers and oligomers. Requires Mg(2+) as cofactor. Ni(2+) serves as cofactor.

It carries out the reaction a tRNA precursor + 2 CTP + ATP = a tRNA with a 3' CCA end + 3 diphosphate. The catalysed reaction is a tRNA with a 3' CCA end + 2 CTP + ATP = a tRNA with a 3' CCACCA end + 3 diphosphate. In terms of biological role, catalyzes the addition and repair of the essential 3'-terminal CCA sequence in tRNAs without using a nucleic acid template. Adds these three nucleotides in the order of C, C, and A to the tRNA nucleotide-73, using CTP and ATP as substrates and producing inorganic pyrophosphate. tRNA 3'-terminal CCA addition is required both for tRNA processing and repair. Also involved in tRNA surveillance by mediating tandem CCA addition to generate a CCACCA at the 3' terminus of unstable tRNAs. While stable tRNAs receive only 3'-terminal CCA, unstable tRNAs are marked with CCACCA and rapidly degraded. This chain is Multifunctional CCA protein, found in Neisseria meningitidis serogroup C / serotype 2a (strain ATCC 700532 / DSM 15464 / FAM18).